The chain runs to 115 residues: NADH-ubiquinone oxidoreductase chain 3 (115 aa).

3 helical membrane-spanning segments follow: residues 3–23 (VMLA…IAFW), 55–75 (FFLV…LLPL), and 84–104 (LPTM…SLAY).

The protein belongs to the complex I subunit 3 family. Core subunit of respiratory chain NADH dehydrogenase (Complex I) which is composed of 45 different subunits. Interacts with TMEM186. Interacts with TMEM242.

The protein resides in the mitochondrion inner membrane. The catalysed reaction is a ubiquinone + NADH + 5 H(+)(in) = a ubiquinol + NAD(+) + 4 H(+)(out). Its function is as follows. Core subunit of the mitochondrial membrane respiratory chain NADH dehydrogenase (Complex I) which catalyzes electron transfer from NADH through the respiratory chain, using ubiquinone as an electron acceptor. Essential for the catalytic activity of complex I. The protein is NADH-ubiquinone oxidoreductase chain 3 of Felis catus (Cat).